The chain runs to 189 residues: dCTP deaminase (189 aa).

DCTP is bound by residues 112 to 117, 136 to 138, Q157, Y171, and Q181; these read KSTYAR and TLE. The active-site Proton donor/acceptor is E138.

Belongs to the dCTP deaminase family. In terms of assembly, homotrimer.

It carries out the reaction dCTP + H2O + H(+) = dUTP + NH4(+). It functions in the pathway pyrimidine metabolism; dUMP biosynthesis; dUMP from dCTP (dUTP route): step 1/2. In terms of biological role, catalyzes the deamination of dCTP to dUTP. This Xanthomonas axonopodis pv. citri (strain 306) protein is dCTP deaminase.